Reading from the N-terminus, the 161-residue chain is Urease accessory protein UreE (161 aa).

A disordered region spans residues 133–161 (EPEAGAYQSAPHSHSHAHDHPFVRLPAHS).

The protein belongs to the UreE family.

It is found in the cytoplasm. In terms of biological role, involved in urease metallocenter assembly. Binds nickel. Probably functions as a nickel donor during metallocenter assembly. The protein is Urease accessory protein UreE of Pseudomonas putida (strain W619).